Consider the following 192-residue polypeptide: EF-hand protein 5 (192 aa).

Positions 1–36 are disordered; the sequence is MKDKAPVSSQQDHFSRGGAVGGKPISDVRGTSRPFY. EF-hand domains are found at residues 46-80, 81-118, 119-154, and 155-190; these read AELA…GLHL, SDEE…EVDD, TMLE…GGEC, and STPE…HRLN. Thr100, Glu102, Asp107, Asp132, and Thr136 together coordinate Ca(2+).

The chain is EF-hand protein 5 from Trypanosoma brucei brucei.